Consider the following 240-residue polypeptide: tRNA (guanine-N(7)-)-methyltransferase (240 aa).

Positions 1 to 20 are disordered; sequence MTESHDTPITSDGEARPHRR. Positions 70, 95, 122, and 145 each coordinate S-adenosyl-L-methionine. Asp-145 is an active-site residue. Substrate-binding positions include Lys-149, Asp-181, and 218–221; that span reads TKFE.

Belongs to the class I-like SAM-binding methyltransferase superfamily. TrmB family.

The enzyme catalyses guanosine(46) in tRNA + S-adenosyl-L-methionine = N(7)-methylguanosine(46) in tRNA + S-adenosyl-L-homocysteine. It functions in the pathway tRNA modification; N(7)-methylguanine-tRNA biosynthesis. Its function is as follows. Catalyzes the formation of N(7)-methylguanine at position 46 (m7G46) in tRNA. The chain is tRNA (guanine-N(7)-)-methyltransferase from Pseudomonas putida (strain ATCC 700007 / DSM 6899 / JCM 31910 / BCRC 17059 / LMG 24140 / F1).